The primary structure comprises 695 residues: uncharacterized protein (695 aa).

This is an uncharacterized protein from Xanthomonas campestris pv. campestris (strain B100).